Consider the following 155-residue polypeptide: MVKEFNTQTELSVRLEALWAVLSKDFITVVPKVLPHIVKDVQLIEGDGGVGTILIFNFLPEVSPSYQREEITEFDESSHEIGLQVIEGGYLSQGLSYYKTTFKLSEIEEDKTLVNVKISYDHDSDIEEKVTPTKTSQSTLMYLRRLERYLSNGSA.

Residues leucine 22, glutamine 67, glutamate 69, and 139 to 142 contribute to the trans-zeatin site; that span reads TLMY. Glutamine 67 contributes to the gibberellin A3 binding site. Threonine 139 contributes to the gibberellin A3 binding site.

The protein belongs to the BetVI family. As to quaternary structure, monomer.

Binds the cytokinin trans-zeatin in vitro. Binds gibberellin A3 (GA3) in vitro. The polypeptide is Phytohormone-binding protein CSBP (Vigna radiata var. radiata (Mung bean)).